A 156-amino-acid polypeptide reads, in one-letter code: Small ribosomal subunit protein uS7 (156 aa).

Belongs to the universal ribosomal protein uS7 family. In terms of assembly, part of the 30S ribosomal subunit. Contacts proteins S9 and S11.

One of the primary rRNA binding proteins, it binds directly to 16S rRNA where it nucleates assembly of the head domain of the 30S subunit. Is located at the subunit interface close to the decoding center, probably blocks exit of the E-site tRNA. The sequence is that of Small ribosomal subunit protein uS7 from Streptococcus sanguinis (strain SK36).